Reading from the N-terminus, the 411-residue chain is Adherens junction-associated protein 1 (411 aa).

Positions 1-43 are cleaved as a signal peptide; sequence MWIQQLLGLSSMPIRWPGRSLGSHLWILIAMLQLAVDFPSCDS. The Extracellular segment spans residues 44-283; sequence LGPGPEFRLL…GETSGLAVHQ (240 aa). Low complexity-rich tracts occupy residues 62 to 76, 121 to 145, and 247 to 264; these read LWSL…LPTP, PPAA…AGAA, and TPVG…SNNG. 2 disordered regions span residues 62 to 156 and 242 to 270; these read LWSL…RGRR and DPWK…IQPP. Residues 284–304 traverse the membrane as a helical segment; it reads IITITVSLIMVIAALITTLVL. The segment at 304-411 is targeting signals; it reads LKNCCAPSGH…VSEKWFEISC (108 aa). Topologically, residues 305 to 411 are cytoplasmic; that stretch reads KNCCAPSGHT…VSEKWFEISC (107 aa).

As to quaternary structure, forms a complex with CDH1 and CTNNB1; interacts directly with CTNNB1. Interacts with AP1M2 and with isoform 2 of BSG/CD147.

Its subcellular location is the basolateral cell membrane. The protein resides in the apical cell membrane. The protein localises to the cell junction. It localises to the adherens junction. Functionally, plays a role in cell adhesion and cell migration. In Rattus norvegicus (Rat), this protein is Adherens junction-associated protein 1 (Ajap1).